A 226-amino-acid polypeptide reads, in one-letter code: Triosephosphate isomerase (226 aa).

A substrate-binding site is contributed by 10-12; that stretch reads NFK. Catalysis depends on histidine 96, which acts as the Electrophile. The active-site Proton acceptor is the glutamate 144. Residues isoleucine 149, glycine 184, and 205–206 each bind substrate; that span reads AS.

This sequence belongs to the triosephosphate isomerase family. Homotetramer; dimer of dimers.

It localises to the cytoplasm. It catalyses the reaction D-glyceraldehyde 3-phosphate = dihydroxyacetone phosphate. It participates in carbohydrate biosynthesis; gluconeogenesis. Its pathway is carbohydrate degradation; glycolysis; D-glyceraldehyde 3-phosphate from glycerone phosphate: step 1/1. Functionally, involved in the gluconeogenesis. Catalyzes stereospecifically the conversion of dihydroxyacetone phosphate (DHAP) to D-glyceraldehyde-3-phosphate (G3P). The protein is Triosephosphate isomerase of Methanopyrus kandleri (strain AV19 / DSM 6324 / JCM 9639 / NBRC 100938).